Reading from the N-terminus, the 410-residue chain is uncharacterized protein (410 aa).

Valine 11–proline 39 contributes to the NAD(+) binding site.

The protein belongs to the lycopene cyclase family.

This is an uncharacterized protein from Deinococcus radiodurans (strain ATCC 13939 / DSM 20539 / JCM 16871 / CCUG 27074 / LMG 4051 / NBRC 15346 / NCIMB 9279 / VKM B-1422 / R1).